A 295-amino-acid polypeptide reads, in one-letter code: 2-methylisocitrate lyase (295 aa).

A substrate-binding site is contributed by 45-47 (SGG). Residues D85 and D87 each coordinate Mg(2+). Residues 123 to 124 (CG), R158, E188, 210 to 212 (NIT), R241, and R270 each bind substrate.

Belongs to the isocitrate lyase/PEP mutase superfamily. Methylisocitrate lyase family. Homotetramer; dimer of dimers. Mg(2+) is required as a cofactor.

It catalyses the reaction (2S,3R)-3-hydroxybutane-1,2,3-tricarboxylate = pyruvate + succinate. It participates in organic acid metabolism; propanoate degradation. Its function is as follows. Involved in the catabolism of short chain fatty acids (SCFA) via the 2-methylcitrate cycle I (propionate degradation route). Catalyzes the thermodynamically favored C-C bond cleavage of (2R,3S)-2-methylisocitrate to yield pyruvate and succinate via an alpha-carboxy-carbanion intermediate. This Salmonella typhimurium (strain LT2 / SGSC1412 / ATCC 700720) protein is 2-methylisocitrate lyase.